Here is a 371-residue protein sequence, read N- to C-terminus: DNA primase large subunit PriL (371 aa).

Residues Cys-230, Cys-301, Cys-310, and Cys-317 each contribute to the [4Fe-4S] cluster site. A disordered region spans residues 337–371; sequence EREKEEGKEKGNEEKKEKREEHEKKNEKGNEIKEK.

Belongs to the eukaryotic-type primase large subunit family. In terms of assembly, heterodimer of a small subunit (PriS) and a large subunit (PriL). [4Fe-4S] cluster serves as cofactor.

In terms of biological role, regulatory subunit of DNA primase, an RNA polymerase that catalyzes the synthesis of short RNA molecules used as primers for DNA polymerase during DNA replication. Stabilizes and modulates the activity of the small subunit, increasing the rate of DNA synthesis, and conferring RNA synthesis capability. The DNA polymerase activity may enable DNA primase to also catalyze primer extension after primer synthesis. May also play a role in DNA repair. In Methanosarcina acetivorans (strain ATCC 35395 / DSM 2834 / JCM 12185 / C2A), this protein is DNA primase large subunit PriL.